Consider the following 270-residue polypeptide: 3-methyl-2-oxobutanoate hydroxymethyltransferase (270 aa).

2 residues coordinate Mg(2+): Asp-50 and Asp-89. Residues 50–51 (DS), Asp-89, and Lys-118 contribute to the 3-methyl-2-oxobutanoate site. Mg(2+) is bound at residue Glu-120. The active-site Proton acceptor is the Glu-187.

Belongs to the PanB family. Homodecamer; pentamer of dimers. Mg(2+) serves as cofactor.

It localises to the cytoplasm. It carries out the reaction 3-methyl-2-oxobutanoate + (6R)-5,10-methylene-5,6,7,8-tetrahydrofolate + H2O = 2-dehydropantoate + (6S)-5,6,7,8-tetrahydrofolate. The protein operates within cofactor biosynthesis; (R)-pantothenate biosynthesis; (R)-pantoate from 3-methyl-2-oxobutanoate: step 1/2. In terms of biological role, catalyzes the reversible reaction in which hydroxymethyl group from 5,10-methylenetetrahydrofolate is transferred onto alpha-ketoisovalerate to form ketopantoate. The sequence is that of 3-methyl-2-oxobutanoate hydroxymethyltransferase from Helicobacter pylori (strain HPAG1).